The following is a 217-amino-acid chain: 7-cyano-7-deazaguanine synthase (217 aa).

An ATP-binding site is contributed by 10 to 20; sequence FSGGQDSTTCL. The Zn(2+) site is built by C185, C194, C197, and C200.

The protein belongs to the QueC family. As to quaternary structure, homodimer. It depends on Zn(2+) as a cofactor.

It carries out the reaction 7-carboxy-7-deazaguanine + NH4(+) + ATP = 7-cyano-7-deazaguanine + ADP + phosphate + H2O + H(+). It functions in the pathway purine metabolism; 7-cyano-7-deazaguanine biosynthesis. Catalyzes the ATP-dependent conversion of 7-carboxy-7-deazaguanine (CDG) to 7-cyano-7-deazaguanine (preQ(0)). This chain is 7-cyano-7-deazaguanine synthase, found in Streptococcus thermophilus (strain ATCC BAA-491 / LMD-9).